A 240-amino-acid chain; its full sequence is Fibronectin type III domain-containing protein 5 (240 aa).

Positions 1–10 are enriched in gly residues; the sequence is MQAARGGAGR. The tract at residues 1–33 is disordered; it reads MQAARGGAGRPGREGRGLERECERSPGPGVAMP. A compositionally biased stretch (basic and acidic residues) spans 11–24; sequence PGREGRGLERECER. Residues 64–155 enclose the Fibronectin type-III domain; it reads APVNVTVRHL…EPVLFKTPRE (92 aa). N-linked (GlcNAc...) asparagine glycans are attached at residues asparagine 67 and asparagine 112. A helical membrane pass occupies residues 181 to 201; that stretch reads GEVLIIVVVLFMWAGVIALFC. Over residues 210 to 221 the composition is skewed to basic and acidic residues; the sequence is NEPNNNKEKTKS. Residues 210–240 are disordered; that stretch reads NEPNNNKEKTKSASETSTPEHQGGGLLRSKI. Over residues 231-240 the composition is skewed to gly residues; the sequence is QGGGLLRSKI. The Microbody targeting signal motif lies at 238–240; sequence SKI.

As to quaternary structure, dimer; may exist in other oligomeric forms. In terms of processing, the extracellular domain is cleaved and released from the cell membrane. N-Glycosylated. In adult, it is highly expressed in skeletal muscle, heart and brain.

The protein resides in the cell membrane. The protein localises to the peroxisome membrane. It localises to the secreted. In terms of biological role, mediates beneficial effects of muscular exercise. Induces browning of white adipose tissue by stimulating UCP1 expression, at least in part, via the nuclear receptor PPARA. The chain is Fibronectin type III domain-containing protein 5 (Fndc5) from Mus musculus (Mouse).